The sequence spans 580 residues: MFS-type transporter thnB (580 aa).

The interval 1 to 33 is disordered; the sequence is MSGDYSATRKSENVDTSTTASQEDSSLAPEQPE. Residues 14–25 are compositionally biased toward polar residues; the sequence is VDTSTTASQEDS. Helical transmembrane passes span 60-80, 92-112, 125-145, 157-177, 188-208, 216-236, and 259-279; these read LITL…DQTI, FHGL…LGGF, LKIS…ICGV, AIAG…LAFS, STMG…GGAF, WCFY…FLFF, and VGTV…QYAG. Asparagine 285 is a glycosylation site (N-linked (GlcNAc...) asparagine). 7 helical membrane passes run 286–306, 331–351, 364–384, 389–409, 421–441, 457–477, and 529–549; these read SSVV…LAAW, IFQF…PIYF, VDNL…GAAV, MATP…GLLY, IGYQ…ALNI, SLYF…QAAF, and FAVS…MVMI.

The protein belongs to the major facilitator superfamily.

It is found in the membrane. Its function is as follows. MFS-type transporter; part of the gene cluster that produces the tetronate natural products trihazones. In Trichoderma harzianum (Hypocrea lixii), this protein is MFS-type transporter thnB.